Reading from the N-terminus, the 48-residue chain is Delta-stichotoxin-Hmg4b (48 aa).

3 cysteine pairs are disulfide-bonded: Cys3–Cys43, Cys5–Cys33, and Cys26–Cys44.

It belongs to the sea anemone sodium channel inhibitory toxin family. Type II subfamily.

The protein localises to the secreted. It is found in the nematocyst. Its function is as follows. Binds specifically to voltage-gated sodium channels (Nav), thereby delaying their inactivation during signal transduction. Its toxicity is greater than that of RpII (AC P01534). In Heteractis magnifica (Magnificent sea anemone), this protein is Delta-stichotoxin-Hmg4b.